Reading from the N-terminus, the 334-residue chain is L-lactate dehydrogenase B chain (334 aa).

N-acetylalanine is present on Ala-2. Lys-7 is modified (N6-acetyllysine). NAD(+) contacts are provided by residues 30–58 (GQVG…LEDK) and Arg-100. Ser-44 is subject to Phosphoserine. An N6-acetyllysine modification is found at Lys-58. Residue Arg-107 coordinates substrate. The residue at position 119 (Lys-119) is an N6-acetyllysine. NAD(+) is bound at residue Asn-139. The substrate site is built by Asn-139 and Arg-170. The active-site Proton acceptor is His-194. Tyr-240 is subject to Phosphotyrosine. Substrate is bound at residue Thr-249. Position 329 is an N6-acetyllysine (Lys-329).

Belongs to the LDH/MDH superfamily. LDH family. As to quaternary structure, homotetramer. Interacts with PTEN upstream reading frame protein MP31; the interaction leads to inhibition of mitochondrial lactate dehydrogenase activity, preventing conversion of lactate to pyruvate in mitochondria.

It is found in the cytoplasm. The protein localises to the mitochondrion inner membrane. The catalysed reaction is (S)-lactate + NAD(+) = pyruvate + NADH + H(+). The protein operates within fermentation; pyruvate fermentation to lactate; (S)-lactate from pyruvate: step 1/1. In terms of biological role, interconverts simultaneously and stereospecifically pyruvate and lactate with concomitant interconversion of NADH and NAD(+). The chain is L-lactate dehydrogenase B chain (Ldhb) from Rattus norvegicus (Rat).